The chain runs to 147 residues: Small ribosomal subunit protein uS12 (147 aa).

This sequence belongs to the universal ribosomal protein uS12 family. In terms of assembly, part of the 30S ribosomal subunit.

In terms of biological role, with S4 and S5 plays an important role in translational accuracy. Located at the interface of the 30S and 50S subunits. This Methanococcus maripaludis (strain C7 / ATCC BAA-1331) protein is Small ribosomal subunit protein uS12.